A 60-amino-acid polypeptide reads, in one-letter code: MLKLKMMLCVMMLPLVVVGCTSKQSVSQCVKPPPPPAWIMQPPPDWQTPLNGIISPSERG.

An N-terminal signal peptide occupies residues 1-19 (MLKLKMMLCVMMLPLVVVG). Residue Cys20 is the site of N-palmitoyl cysteine; by host attachment. Cys20 carries S-diacylglycerol cysteine; by host lipidation. Residues 20 to 60 (CTSKQSVSQCVKPPPPPAWIMQPPPDWQTPLNGIISPSERG) lie on the Periplasmic side of the membrane. The interval 32–44 (PPPPPAWIMQPPP) is proline-rich.

Belongs to the Lambdavirus o-spanin family. In terms of assembly, homodimer; disulfide-linked. Interacts (via C-terminus) with the spanin inner membrane subunit (via C-terminus). Part of the spanin complex which spans the entire periplasmic space. The spanin complex is composed of one homodimer of the i-spanin linked by intermolecular disulfide bonds involving two Cys residues and one homodimer of the o-spanin covalently linked by an intermolecular disulfide bond involving one Cys.

The protein resides in the host cell outer membrane. Component of the spanin complex that disrupts the host outer membrane and participates in cell lysis during virus exit. The spanin complex conducts the final step in host lysis by disrupting the outer membrane after holin and endolysin action have permeabilized the inner membrane and degraded the host peptidoglycans. Host outer membrane disruption due to local fusion between the inner and outer membrane performed by the spanin complex. In Escherichia phage lambda (Bacteriophage lambda), this protein is Spanin, outer lipoprotein subunit (Rz1).